The chain runs to 529 residues: GTPase Obg (529 aa).

An Obg domain is found at 2 to 159 (PTFVDRVVLH…LDAVLELKTV (158 aa)). The segment at 62-86 (FHPHQRASRGRPGQGSNRHGADGAD) is disordered. Residues 160–332 (ADVALVGFPS…LSLALADLVA (173 aa)) enclose the OBG-type G domain. GTP is bound by residues 166–173 (GFPSAGKS), 191–195 (FTTLV), 213–216 (DVPG), 284–287 (NKID), and 313–315 (STA). Mg(2+) is bound by residues S173 and T193. The region spanning 350-427 (PRAVNEPDFT…IGEVTFDWEP (78 aa)) is the OCT domain. Disordered stretches follow at residues 434-494 (LGNG…DRLR) and 506-529 (ARRA…EEEG). Low complexity-rich tracts occupy residues 461–472 (AGTAASGAAPSP) and 508–520 (RAAA…VRGE).

The protein belongs to the TRAFAC class OBG-HflX-like GTPase superfamily. OBG GTPase family. Monomer. Mg(2+) serves as cofactor.

Its subcellular location is the cytoplasm. Functionally, an essential GTPase which binds GTP, GDP and possibly (p)ppGpp with moderate affinity, with high nucleotide exchange rates and a fairly low GTP hydrolysis rate. Plays a role in control of the cell cycle, stress response, ribosome biogenesis and in those bacteria that undergo differentiation, in morphogenesis control. This Frankia casuarinae (strain DSM 45818 / CECT 9043 / HFP020203 / CcI3) protein is GTPase Obg.